Reading from the N-terminus, the 118-residue chain is DNA-binding protein inhibitor ID-3-A (118 aa).

A bHLH domain is found at 32 to 84 (SHKGPGMDEPMGLLYDMNGCYSKLKELVPGIPQGSKLSQVEILQHVIDYIFDL).

As to quaternary structure, homodimer. Heterodimer with other HLH proteins. Interacts (via HLH domain) with the bHLH protein hes4/hairy2 (via Orange domain). Interacts with stat3. As to expression, at gastrula stage, expressed in all three germ layers, but becomes localized to discrete domains of the developing nervous system during neurulation, including the anterior neural plate, cement gland, eye anlagen, otic placode and both cranial and trunk premigratory and early migratory neural crest cells. Also expressed in the most dorsal and ventral portions of the myotome, the developing heart and anterior blood islets, and in the tail fin mesenchyme. Expressed at a low level in limbs, with expression decreasing as limbs develop, but expressed at a high level in blastemas (regenerated limbs), where expression is localized to both the blastermal epidermis and mesenchyme. Widely expressed in adults including the liver and heart.

It localises to the nucleus. Functionally, transcriptional regulator (lacking a basic DNA binding domain) which negatively regulates the basic helix-loop-helix (bHLH) transcription factors by forming heterodimers and inhibiting their DNA binding and transcriptional activity. Influences cell fate decisions in the embryo by sequestering and blocking the activity of the bHLH transcription factors that control these decisions. Inhibits the binding of myogenic bHLH-containing complexes to E-box DNA, thereby preventing activation of muscle-specific target genes. Also inhibits the activity of neurogenic factor neurod1/neuroD. Plays a role in cell cycle progression and survival of neural crest progenitors; binding to either hes4-B/hairy2b or stat3 blocks the formation of transcription factor complexes and the repressor function of hes4-B/hairy2B, to allow neural crest progenitors to differentiate. May play a role in the regulation of the circadian rhythm. The protein is DNA-binding protein inhibitor ID-3-A (id3-a) of Xenopus laevis (African clawed frog).